Reading from the N-terminus, the 218-residue chain is Pyridoxine/pyridoxamine 5'-phosphate oxidase (218 aa).

Residues 14-17 (RREY) and K72 contribute to the substrate site. FMN contacts are provided by residues 67–72 (RIVLLK), 82–83 (YT), R88, K89, and Q111. Substrate contacts are provided by Y129, R133, and S137. Residues 146–147 (QS) and W191 contribute to the FMN site. Substrate is bound at residue 197-199 (RLH). R201 contributes to the FMN binding site.

This sequence belongs to the pyridoxamine 5'-phosphate oxidase family. Homodimer. It depends on FMN as a cofactor.

It catalyses the reaction pyridoxamine 5'-phosphate + O2 + H2O = pyridoxal 5'-phosphate + H2O2 + NH4(+). The catalysed reaction is pyridoxine 5'-phosphate + O2 = pyridoxal 5'-phosphate + H2O2. It functions in the pathway cofactor metabolism; pyridoxal 5'-phosphate salvage; pyridoxal 5'-phosphate from pyridoxamine 5'-phosphate: step 1/1. Its pathway is cofactor metabolism; pyridoxal 5'-phosphate salvage; pyridoxal 5'-phosphate from pyridoxine 5'-phosphate: step 1/1. Its function is as follows. Catalyzes the oxidation of either pyridoxine 5'-phosphate (PNP) or pyridoxamine 5'-phosphate (PMP) into pyridoxal 5'-phosphate (PLP). In Escherichia fergusonii (strain ATCC 35469 / DSM 13698 / CCUG 18766 / IAM 14443 / JCM 21226 / LMG 7866 / NBRC 102419 / NCTC 12128 / CDC 0568-73), this protein is Pyridoxine/pyridoxamine 5'-phosphate oxidase.